The primary structure comprises 373 residues: Nuclear migration protein JNM1 (373 aa).

Residues 33–53 (EVKEDGQQEEQEEASSRKDGL) are disordered. S91 carries the post-translational modification Phosphoserine. 3 coiled-coil regions span residues 114 to 139 (KIENLTSEMQTEIKELCEIQSKLATE), 200 to 245 (EDRK…EFEN), and 331 to 367 (WLKALNELDKKFDEQEVKIRENMEQIRRKIDTLEDEA).

Component of the dynactin complex composed of at least ARP1, JNM1, NIP100 and ARP10. Dynactin comprises a short rod of ARP1 polymers attached to ARP10 at its pointed-end and probably associated with the capping protein at its barbed-end. The rod structure is implicated in dynein cargo binding. A sidearm formed by NIP100 projects from the ARP1 filament and is implicated in motor binding. Interacts with ARP1.

It is found in the cytoplasm. The protein resides in the cytoskeleton. In terms of biological role, component of the dynactin complex which assists cytoplasmic dynein by increasing its processivity and by regulation of its cargo binding. The dynactin complex is required for the spindle translocation late in anaphase and is involved in a cell wall synthesis checkpoint. JNM1 is associated with the rod and links it to the projecting sidearm. Required for proper nuclear migration during the mitotic cell cycle and for astral microtubule development. The sequence is that of Nuclear migration protein JNM1 (JNM1) from Saccharomyces cerevisiae (strain ATCC 204508 / S288c) (Baker's yeast).